The chain runs to 348 residues: Anthranilate phosphoribosyltransferase (348 aa).

5-phospho-alpha-D-ribose 1-diphosphate is bound by residues Gly87, 90–91, Thr95, 97–100, 115–123, and Ser127; these read GD, NIST, and KHGNRSASG. Gly87 is a binding site for anthranilate. A Mg(2+)-binding site is contributed by Ser99. Anthranilate is bound at residue Asn118. Arg173 serves as a coordination point for anthranilate. 2 residues coordinate Mg(2+): Asp232 and Glu233.

It belongs to the anthranilate phosphoribosyltransferase family. In terms of assembly, homodimer. It depends on Mg(2+) as a cofactor.

The enzyme catalyses N-(5-phospho-beta-D-ribosyl)anthranilate + diphosphate = 5-phospho-alpha-D-ribose 1-diphosphate + anthranilate. Its pathway is amino-acid biosynthesis; L-tryptophan biosynthesis; L-tryptophan from chorismate: step 2/5. Functionally, catalyzes the transfer of the phosphoribosyl group of 5-phosphorylribose-1-pyrophosphate (PRPP) to anthranilate to yield N-(5'-phosphoribosyl)-anthranilate (PRA). The chain is Anthranilate phosphoribosyltransferase from Synechococcus sp. (strain CC9311).